Here is a 269-residue protein sequence, read N- to C-terminus: Shikimate dehydrogenase (NADP(+)) (269 aa).

Shikimate is bound by residues 14–16 and T61; that span reads SVS. The active-site Proton acceptor is the K65. Positions 85 and 98 each coordinate shikimate. Residues 120–124, 143–148, and T211 contribute to the NADP(+) site; these read GAGGA and NRTEEK. Y213 contributes to the shikimate binding site. Residue G234 participates in NADP(+) binding.

It belongs to the shikimate dehydrogenase family. As to quaternary structure, homodimer.

The catalysed reaction is shikimate + NADP(+) = 3-dehydroshikimate + NADPH + H(+). The protein operates within metabolic intermediate biosynthesis; chorismate biosynthesis; chorismate from D-erythrose 4-phosphate and phosphoenolpyruvate: step 4/7. Involved in the biosynthesis of the chorismate, which leads to the biosynthesis of aromatic amino acids. Catalyzes the reversible NADPH linked reduction of 3-dehydroshikimate (DHSA) to yield shikimate (SA). This Archaeoglobus fulgidus (strain ATCC 49558 / DSM 4304 / JCM 9628 / NBRC 100126 / VC-16) protein is Shikimate dehydrogenase (NADP(+)).